A 168-amino-acid polypeptide reads, in one-letter code: GTP-dependent dephospho-CoA kinase (168 aa).

Residues aspartate 49, valine 50, valine 51, aspartate 68, lysine 70, and glutamate 120 each contribute to the GTP site.

Belongs to the GTP-dependent DPCK family.

The enzyme catalyses 3'-dephospho-CoA + GTP = GDP + CoA + H(+). It participates in cofactor biosynthesis; coenzyme A biosynthesis. In terms of biological role, catalyzes the GTP-dependent phosphorylation of the 3'-hydroxyl group of dephosphocoenzyme A to form coenzyme A (CoA). This chain is GTP-dependent dephospho-CoA kinase, found in Pyrobaculum calidifontis (strain DSM 21063 / JCM 11548 / VA1).